Consider the following 183-residue polypeptide: Heavy metal-associated isoprenylated plant protein 44 (183 aa).

The region spanning 50–113 (LQTVELKVRM…AVRRAGKRAE (64 aa)) is the HMA domain. A metal cation is bound by residues Cys-61 and Cys-64. Cysteine methyl ester is present on Cys-180. Cys-180 carries S-farnesyl cysteine lipidation. The propeptide at 181–183 (RLM) is removed in mature form.

The protein belongs to the HIPP family.

Heavy-metal-binding protein. The polypeptide is Heavy metal-associated isoprenylated plant protein 44 (Arabidopsis thaliana (Mouse-ear cress)).